We begin with the raw amino-acid sequence, 477 residues long: Proline--tRNA ligase (477 aa).

Residues T111, E113, and R142 each coordinate L-proline. ATP contacts are provided by R142, T153, Q225, and T228. Residue H230 participates in L-proline binding. Residues S262 and R264 each coordinate ATP. Residues 340 to 369 are interaction with tRNA; the sequence is ELKGVPFRVELGPKDLEGGQAVLASRLGGK. Residues C427, C432, C458, and C461 each contribute to the Zn(2+) site.

Belongs to the class-II aminoacyl-tRNA synthetase family. ProS type 3 subfamily. As to quaternary structure, homodimer. Only one tRNA molecule binds per dimer.

The protein resides in the cytoplasm. It catalyses the reaction tRNA(Pro) + L-proline + ATP = L-prolyl-tRNA(Pro) + AMP + diphosphate. Functionally, catalyzes the attachment of proline to tRNA(Pro) in a two-step reaction: proline is first activated by ATP to form Pro-AMP and then transferred to the acceptor end of tRNA(Pro). Can inadvertently accommodate and process cysteine. The protein is Proline--tRNA ligase (proS) of Thermus thermophilus (strain ATCC 27634 / DSM 579 / HB8).